Consider the following 361-residue polypeptide: DNA polymerase subunit gamma-2, mitochondrial (361 aa).

The N-terminal 18 residues, 1 to 18, are a transit peptide targeting the mitochondrion; that stretch reads MSRIQRCFKSLASAGFFR.

In terms of assembly, component of the DNA polymerase gamma complex consisting of two subunits: the catalytic subunit DNApol-gamma/DNApolG1 and the accessory subunit PolG2/DNApol-gamma35. In terms of tissue distribution, expressed in ovaries (at protein level).

It is found in the mitochondrion. Functionally, as accessory component of the DNA polymerase gamma complex is involved in the replication of mitochondrial DNA. Does not bind DNA. Essential for mitochondrial DNA maintenance and larval development. The sequence is that of DNA polymerase subunit gamma-2, mitochondrial from Drosophila melanogaster (Fruit fly).